Consider the following 871-residue polypeptide: Serrate RNA effector molecule homolog (871 aa).

A disordered region spans residues 1 to 90 (MGDSDDEYDR…RRDWDGHSSD (90 aa)). The residue at position 2 (Gly2) is an N-acetylglycine. At Ser4 the chain carries Phosphoserine. Tyr8 is modified (phosphotyrosine). Over residues 8 to 73 (YDRRRRDKFR…ERFSPPRHEL (66 aa)) the composition is skewed to basic and acidic residues. Phosphoserine is present on residues Ser67, Ser74, and Ser136. Residue Lys150 forms a Glycyl lysine isopeptide (Lys-Gly) (interchain with G-Cter in SUMO2) linkage. The tract at residues 272-411 (EEEEQAGKPG…KPKDAAGLEC (140 aa)) is disordered. The span at 297-347 (DGERKTNDKDEKKEDSKQAENDSSNDDKTKKSEGDGDKEEKKEDSEKEAKK) shows a compositional bias: basic and acidic residues. Over residues 370 to 385 (SESESESGQAEEEKEE) the composition is skewed to acidic residues. Residues 386-411 (AEALKEKEKPKEEEWEKPKDAAGLEC) show a composition bias toward basic and acidic residues. A phosphoserine mark is found at Ser492 and Ser539. Phosphothreonine is present on Thr543. The residue at position 569 (Ser569) is a Phosphoserine. The disordered stretch occupies residues 574 to 597 (ELLGSSGGAPPEEPPKEGNPAEIN). The residue at position 670 (Thr670) is a Phosphothreonine. Position 678 is a phosphoserine (Ser678). Omega-N-methylarginine is present on residues Arg828, Arg835, and Arg845. Positions 830-849 (NYDAFRGQGGYPGKPRNRMV) are disordered.

The protein belongs to the ARS2 family. In terms of assembly, interacts with CASP8AP2, ERBB4, NCBP1/CBP80 and DROSHA. Interacts with LUZP4. Interacts with NCBP2/CBP20 and NCBP3. Interacts with MTREX.

It is found in the nucleus. The protein localises to the nucleoplasm. Its subcellular location is the cytoplasm. Functionally, acts as a mediator between the cap-binding complex (CBC) and the primary microRNAs (miRNAs) processing machinery during cell proliferation. Contributes to the stability and delivery of capped primary miRNA transcripts to the primary miRNA processing complex containing DGCR8 and DROSHA, thereby playing a role in RNA-mediated gene silencing (RNAi) by miRNAs. Binds capped RNAs (m7GpppG-capped RNA); however interaction is probably mediated via its interaction with NCBP1/CBP80 component of the CBC complex. Involved in cell cycle progression at S phase. Does not directly confer arsenite resistance but rather modulates arsenic sensitivity. Independently of its activity on miRNAs, necessary and sufficient to promote neural stem cell self-renewal. Does so by directly binding SOX2 promoter and positively regulating its transcription. This is Serrate RNA effector molecule homolog (SRRT) from Pongo abelii (Sumatran orangutan).